The sequence spans 217 residues: Probable glutathione S-transferase DHAR4 (217 aa).

Glutathione contacts are provided by lysine 8 and aspartate 19. Residues lysine 8 and aspartate 19 each contribute to the L-ascorbate site. The GST N-terminal domain occupies 10–85; the sequence is ASGAPDVLGD…DLIVGIIEEK (76 aa). Residue cysteine 20 is the Nucleophile of the active site. Positions 20–25 match the Glutathione-binding motif; sequence CPFGQR. Glutathione-binding residues include lysine 47, serine 75, histidine 164, and tryptophan 211. The 132-residue stretch at 86–217 folds into the GST C-terminal domain; it reads YPEPSLVTFP…IASWAPKLDV (132 aa). Lysine 214 contributes to the L-ascorbate binding site.

Belongs to the GST superfamily. DHAR family. In terms of assembly, monomer.

It is found in the cytoplasm. The protein resides in the cytosol. It catalyses the reaction RX + glutathione = an S-substituted glutathione + a halide anion + H(+). It carries out the reaction L-dehydroascorbate + 2 glutathione = glutathione disulfide + L-ascorbate. Exhibits glutathione-dependent thiol transferase and dehydroascorbate (DHA) reductase activities. This is Probable glutathione S-transferase DHAR4 (DHAR4) from Arabidopsis thaliana (Mouse-ear cress).